The following is a 269-amino-acid chain: MSAITPSSEVAAGITTPDFPRDIRPRSIREMHVPPSDPVPDVPIPTNTTGKPVYYIYDGSITRASGQLVRDHSCDGPIHYTDPLWECTLFEHLPPSHPGWPNDCVLPYDHNMSPYHRVPIRTICGFNYWETDRLDSTNASFWPALYKCSGFRRNYPWRYSTDQLLAALDMTPEQLVSAKSCVSVVALLNTMNWTSHHLSGLRPQHVHYCMSDWSVQFTKEDLEVLTPGAWFDGLLRVPVDPRVPAIGLTKEQLWTHPFVILGWLRLALQ.

A disordered region spans residues 1 to 23 (MSAITPSSEVAAGITTPDFPRDI).

The protein belongs to the aquareoviridae NS4 protein family.

The sequence is that of Non-structural protein 4 (S7) from Aquareovirus G (isolate American grass carp/USA/PB01-155/-) (AQRV-G).